Here is a 598-residue protein sequence, read N- to C-terminus: Elongation factor 4 (598 aa).

Residues 2-184 (NNIRNFAIIA…AIVAKLPAPQ (183 aa)) enclose the tr-type G domain. Residues 14–19 (DHGKST) and 131–134 (NKVD) contribute to the GTP site.

Belongs to the TRAFAC class translation factor GTPase superfamily. Classic translation factor GTPase family. LepA subfamily.

The protein resides in the cell membrane. It catalyses the reaction GTP + H2O = GDP + phosphate + H(+). Its function is as follows. Required for accurate and efficient protein synthesis under certain stress conditions. May act as a fidelity factor of the translation reaction, by catalyzing a one-codon backward translocation of tRNAs on improperly translocated ribosomes. Back-translocation proceeds from a post-translocation (POST) complex to a pre-translocation (PRE) complex, thus giving elongation factor G a second chance to translocate the tRNAs correctly. Binds to ribosomes in a GTP-dependent manner. The sequence is that of Elongation factor 4 from Wolbachia sp. subsp. Drosophila simulans (strain wRi).